The primary structure comprises 161 residues: Anaerobic nitrite reductase Glb1-1 (161 aa).

Positions 8-157 (CFTEEQEALV…LVGAIKSEMK (150 aa)) constitute a Globin domain. The Homodimerization signature appears at 41-45 (EIAPS). Residues S51, K65, H69, K99, T103, and H104 each coordinate heme b. Positions 111 to 123 (NEHFEVTKFALLD) match the Homodimerization motif.

This sequence belongs to the plant globin family. Homodimer. Heme b serves as cofactor. In terms of tissue distribution, mainly expressed in root nodules, and, to a lower extent, in leaves, roots, stems, flowers and fruits. Accumulates in mature root nodules.

The catalysed reaction is Fe(III)-heme b-[protein] + nitric oxide + H2O = Fe(II)-heme b-[protein] + nitrite + 2 H(+). Phytoglobin that reduces nitrite to nitric oxide (NO) under anoxic conditions (e.g. during flooding or in waterlogged soil) and upon root nodulation. Required for general plant development and during nodulation, especially for the onset of symbiosis. Monitors nitric oxide (NO) levels during early phase of the nitrogen-fixing symbiosis and buffers oxygen in functioning nodules. May not function as an oxygen storage or transport protein. Has an unusually high affinity for O(2) through a hexacoordinate heme iron because of a very low dissociation constant. The chain is Anaerobic nitrite reductase Glb1-1 from Lotus japonicus (Lotus corniculatus var. japonicus).